We begin with the raw amino-acid sequence, 369 residues long: Naringenin,2-oxoglutarate 3-dioxygenase (369 aa).

In terms of domain architecture, Fe2OG dioxygenase spans 193 to 297 (CVDMDQKVVV…RLSIATFQNP (105 aa)). Histidine 220, aspartate 222, and histidine 278 together coordinate Fe cation. Arginine 288 serves as a coordination point for 2-oxoglutarate.

This sequence belongs to the iron/ascorbate-dependent oxidoreductase family. Fe(2+) is required as a cofactor. L-ascorbate serves as cofactor.

It catalyses the reaction a (2S)-flavan-4-one + 2-oxoglutarate + O2 = a (2R,3R)-dihydroflavonol + succinate + CO2. Its pathway is secondary metabolite biosynthesis; flavonoid biosynthesis. Catalyzes the 3-beta-hydroxylation of 2S-flavanones to 2R,3R-dihydroflavonols which are intermediates in the biosynthesis of flavonols, anthocyanidins, catechins and proanthocyanidins in plants. This chain is Naringenin,2-oxoglutarate 3-dioxygenase (AN3), found in Petunia hybrida (Petunia).